Consider the following 291-residue polypeptide: Ribosomal RNA small subunit methyltransferase A (291 aa).

The S-adenosyl-L-methionine site is built by Asn29, Leu31, Gly56, Glu77, Asp102, and Asn127.

This sequence belongs to the class I-like SAM-binding methyltransferase superfamily. rRNA adenine N(6)-methyltransferase family. RsmA subfamily.

It is found in the cytoplasm. The enzyme catalyses adenosine(1518)/adenosine(1519) in 16S rRNA + 4 S-adenosyl-L-methionine = N(6)-dimethyladenosine(1518)/N(6)-dimethyladenosine(1519) in 16S rRNA + 4 S-adenosyl-L-homocysteine + 4 H(+). Functionally, specifically dimethylates two adjacent adenosines (A1518 and A1519) in the loop of a conserved hairpin near the 3'-end of 16S rRNA in the 30S particle. May play a critical role in biogenesis of 30S subunits. In Geobacillus sp. (strain WCH70), this protein is Ribosomal RNA small subunit methyltransferase A.